A 237-amino-acid polypeptide reads, in one-letter code: Phosphoribosylaminoimidazole-succinocarboxamide synthase (237 aa).

Belongs to the SAICAR synthetase family.

The enzyme catalyses 5-amino-1-(5-phospho-D-ribosyl)imidazole-4-carboxylate + L-aspartate + ATP = (2S)-2-[5-amino-1-(5-phospho-beta-D-ribosyl)imidazole-4-carboxamido]succinate + ADP + phosphate + 2 H(+). It participates in purine metabolism; IMP biosynthesis via de novo pathway; 5-amino-1-(5-phospho-D-ribosyl)imidazole-4-carboxamide from 5-amino-1-(5-phospho-D-ribosyl)imidazole-4-carboxylate: step 1/2. In Listeria innocua serovar 6a (strain ATCC BAA-680 / CLIP 11262), this protein is Phosphoribosylaminoimidazole-succinocarboxamide synthase.